The following is a 144-amino-acid chain: Deoxyuridine 5'-triphosphate nucleotidohydrolase (144 aa).

Substrate is bound by residues R63–G65, N76, and T80–D82.

The protein belongs to the dUTPase family. Requires Mg(2+) as cofactor.

It carries out the reaction dUTP + H2O = dUMP + diphosphate + H(+). Its pathway is pyrimidine metabolism; dUMP biosynthesis; dUMP from dCTP (dUTP route): step 2/2. In terms of biological role, this enzyme is involved in nucleotide metabolism: it produces dUMP, the immediate precursor of thymidine nucleotides and it decreases the intracellular concentration of dUTP so that uracil cannot be incorporated into DNA. The chain is Deoxyuridine 5'-triphosphate nucleotidohydrolase from Treponema denticola (strain ATCC 35405 / DSM 14222 / CIP 103919 / JCM 8153 / KCTC 15104).